Here is a 278-residue protein sequence, read N- to C-terminus: Manganese import system permease protein ScaB (278 aa).

The next 8 helical transmembrane spans lie at 18–38 (ALIT…FIIL), 61–81 (ILGI…SIII), 94–114 (TAIG…ISVA), 134–154 (LDMW…SIFF), 174–194 (VNFY…TAMQ), 196–216 (VGTI…YLYA), 222–242 (MILL…FIGY), and 246–266 (VAAG…SFFI).

The protein belongs to the ABC-3 integral membrane protein family. The complex is composed of two ATP-binding proteins (ScaC), two transmembrane proteins (ScaB) and a solute-binding protein (ScaA).

Its subcellular location is the cell membrane. Part of the high-affinity ABC transporter complex ScaABC involved in manganese import. Probably responsible for the translocation of the substrate across the membrane. Essential for growth under Mn(2+)-limiting conditions. In Streptococcus gordonii, this protein is Manganese import system permease protein ScaB.